The chain runs to 453 residues: Probable exopolygalacturonase B (453 aa).

The signal sequence occupies residues 1–16; the sequence is MKFFALAALFASTVNS. Asn-185 and Asn-225 each carry an N-linked (GlcNAc...) asparagine glycan. Asp-255 functions as the Proton donor in the catalytic mechanism. A disulfide bridge links Cys-257 with Cys-274. N-linked (GlcNAc...) asparagine glycosylation is found at Asn-263 and Asn-275. His-278 is an active-site residue. 2 PbH1 repeats span residues 295 to 316 and 327 to 348; these read IENVWIENVTLLNGENGARLKA and INNVTYKNIHVENTDNPIVLDQ. N-linked (GlcNAc...) asparagine glycans are attached at residues Asn-302, Asn-329, Asn-354, and Asn-366. A PbH1 3 repeat occupies 362–405; that stretch reads PSRVNFTNIVFEDIYGTSSGKRGKVVADLTCSPNAVCSGIRLKN. Cysteines 392 and 398 form a disulfide. N-linked (GlcNAc...) asparagine glycosylation occurs at Asn-436.

Belongs to the glycosyl hydrolase 28 family.

It is found in the secreted. The catalysed reaction is [(1-&gt;4)-alpha-D-galacturonosyl](n) + H2O = alpha-D-galacturonate + [(1-&gt;4)-alpha-D-galacturonosyl](n-1). In terms of biological role, specific in hydrolyzing the terminal glycosidic bond of polygalacturonic acid and oligogalacturonates. The chain is Probable exopolygalacturonase B (pgxB) from Aspergillus fumigatus (strain CBS 144.89 / FGSC A1163 / CEA10) (Neosartorya fumigata).